The following is a 158-amino-acid chain: Protein NrdI (158 aa).

The protein belongs to the NrdI family.

In terms of biological role, probably involved in ribonucleotide reductase function. This Rhodococcus jostii (strain RHA1) protein is Protein NrdI.